The following is an 89-amino-acid chain: uncharacterized protein (89 aa).

3 consecutive transmembrane segments (helical) span residues 5–27 (TLTEYCLLIFFTGFYLAVTGFTA), 32–51 (LYIGIALIYIFSHIFSKRLL), and 63–85 (LFFSVLAIIGSVFITVLCIALVA).

It localises to the cell membrane. This is an uncharacterized protein from Bacillus subtilis (strain 168).